We begin with the raw amino-acid sequence, 271 residues long: Thiazole synthase (271 aa).

Catalysis depends on K95, which acts as the Schiff-base intermediate with DXP. 1-deoxy-D-xylulose 5-phosphate-binding positions include G156, 182–183 (AG), and 204–205 (NT).

It belongs to the ThiG family. In terms of assembly, homotetramer. Forms heterodimers with either ThiH or ThiS.

The protein localises to the cytoplasm. The catalysed reaction is [ThiS sulfur-carrier protein]-C-terminal-Gly-aminoethanethioate + 2-iminoacetate + 1-deoxy-D-xylulose 5-phosphate = [ThiS sulfur-carrier protein]-C-terminal Gly-Gly + 2-[(2R,5Z)-2-carboxy-4-methylthiazol-5(2H)-ylidene]ethyl phosphate + 2 H2O + H(+). It participates in cofactor biosynthesis; thiamine diphosphate biosynthesis. In terms of biological role, catalyzes the rearrangement of 1-deoxy-D-xylulose 5-phosphate (DXP) to produce the thiazole phosphate moiety of thiamine. Sulfur is provided by the thiocarboxylate moiety of the carrier protein ThiS. In vitro, sulfur can be provided by H(2)S. The polypeptide is Thiazole synthase (Yersinia pestis).